A 152-amino-acid polypeptide reads, in one-letter code: MEESPIKFADIDINEILKTLPHRNPFLLIDRVKNIRADYSGIGVKNVSFNEPCFQGHFPERPVYPGVLMIEGMAQTAGVIGIKSVEGTEKPRAVYFLTIDKCKFRKPVLPGQTIEYHMRSIGRRKTMWWFHGDAKVDGVVVAEADVGAMLTD.

Residue His57 is part of the active site.

The protein belongs to the thioester dehydratase family. FabZ subfamily.

The protein resides in the cytoplasm. The catalysed reaction is a (3R)-hydroxyacyl-[ACP] = a (2E)-enoyl-[ACP] + H2O. Its function is as follows. Involved in unsaturated fatty acids biosynthesis. Catalyzes the dehydration of short chain beta-hydroxyacyl-ACPs and long chain saturated and unsaturated beta-hydroxyacyl-ACPs. The sequence is that of 3-hydroxyacyl-[acyl-carrier-protein] dehydratase FabZ from Bradyrhizobium sp. (strain ORS 278).